The following is a 218-amino-acid chain: CD99 antigen-like protein 2 (218 aa).

Positions 1-25 (MVAWRSAFLVCLAFSLATLVQRGSG) are cleaved as a signal peptide. Topologically, residues 26 to 136 (DFDDFNLKDA…PGSGMVAETG (111 aa)) are extracellular. The interval 72–128 (LADALDDRNDRDDGRRKPIAGGGGFSDKDLEDIVGGGEYKPDKGKGDGRYGSNDDPG) is disordered. Composition is skewed to basic and acidic residues over residues 76 to 87 (LDDRNDRDDGRR) and 110 to 119 (YKPDKGKGDG). Ser129 is a glycosylation site (O-linked (Xyl...) (chondroitin sulfate) serine). Residues 137-157 (TIAGVASALAMALIGAVSSYI) form a helical membrane-spanning segment. Residues 158–218 (SYQQKKFCFS…EPPPSEPARI (61 aa)) are Cytoplasmic-facing.

Belongs to the CD99 family. In terms of processing, O-glycosylated.

The protein resides in the cell membrane. Its subcellular location is the cell junction. It localises to the secreted. Plays a role in a late step of leukocyte extravasation helping cells to overcome the endothelial basement membrane. Acts at the same site as, but independently of, PECAM1. Homophilic adhesion molecule, but these interactions may not be required for cell aggregation. The polypeptide is CD99 antigen-like protein 2 (CD99L2) (Pongo abelii (Sumatran orangutan)).